We begin with the raw amino-acid sequence, 1848 residues long: Chitin synthase E (1848 aa).

Residues 1-17 (MAAPSPAGGAPSHAQSS) show a composition bias toward low complexity. The segment at 1–22 (MAAPSPAGGAPSHAQSSLPSLP) is disordered. A Myosin motor domain is found at 1 to 779 (MAAPSPAGGA…CWADLAKVGE (779 aa)). 102–109 (GESGSGKT) is an ATP binding site. The interval 593–621 (SSKPLRMPSMARRKTSPSSRLAFDAGDAD) is disordered. The interval 659-683 (LDIVNKCLSSTNLNPYFIFCLKPND) is actin-binding. The next 2 helical transmembrane spans lie at 889-909 (WIALVYLLTFYIPDFAIKLFG) and 928-948 (LIIWFSCGVAIFFIVAFPGLV). The Cytochrome b5 heme-binding domain occupies 952-1040 (QHVYSAAELS…LLDYRPTNIS (89 aa)). Residues asparagine 1038 and asparagine 1063 are each glycosylated (N-linked (GlcNAc...) asparagine). Residues 1200–1220 (FILAISVLICSIIVFKFLAAL) form a helical membrane-spanning segment. N-linked (GlcNAc...) asparagine glycans are attached at residues asparagine 1423, asparagine 1457, and asparagine 1563. 3 helical membrane-spanning segments follow: residues 1595–1615 (LSTVIQPVTLAYIIYLIYWLV), 1621–1641 (IPYTSLILLAAIYGLQALIFI), and 1648–1668 (MVGWMIVYLLALPVFSLALPL). An N-linked (GlcNAc...) asparagine glycan is attached at asparagine 1786. One can recognise a DEK-C domain in the interval 1790–1845 (LPSDDAILAEIREILRTADLMSVTKKSIKLELERRFGVNLDLKRPYINSATEAVLA).

The protein in the N-terminal section; belongs to the TRAFAC class myosin-kinesin ATPase superfamily. Myosin family. It in the C-terminal section; belongs to the chitin synthase family. Class V subfamily.

It localises to the cell membrane. It is found in the cell septum. The protein resides in the cell tip. The enzyme catalyses [(1-&gt;4)-N-acetyl-beta-D-glucosaminyl](n) + UDP-N-acetyl-alpha-D-glucosamine = [(1-&gt;4)-N-acetyl-beta-D-glucosaminyl](n+1) + UDP + H(+). Polymerizes chitin, a structural polymer of the cell wall and septum, by transferring the sugar moiety of UDP-GlcNAc to the non-reducing end of the growing chitin polymer. Important for hyphal growth and conidiophore development but not pathogenicity. The chain is Chitin synthase E from Aspergillus fumigatus (strain ATCC MYA-4609 / CBS 101355 / FGSC A1100 / Af293) (Neosartorya fumigata).